A 309-amino-acid polypeptide reads, in one-letter code: General transcription factor IIH subunit 3 (309 aa).

The C4-type zinc finger occupies 269–286 (CSVCLSIFCNFSPICTTC).

It belongs to the TFB4 family. Part of a TFIID-containing RNA polymerase II pre-initiation complex that is composed of TBP and at least GTF2A1, GTF2A2, GTF2E1, GTF2E2, GTF2F1, GTF2H2, GTF2H3, GTF2H4, GTF2H5, GTF2B, TCEA1, ERCC2, ERCC3, TAF1, TAF2, TAF3, TAF4, TAF5, TAF6, TAF7, TAF8, TAF9, TAF10, TAF11, TAF12 and TAF13. Component of the 7-subunit TFIIH core complex composed of XPB/ERCC3, XPD/ERCC2, GTF2H1, GTF2H2, GTF2H3, GTF2H4 and GTF2H5, which is active in NER. The core complex associates with the 3-subunit CDK-activating kinase (CAK) module composed of CCNH/cyclin H, CDK7 and MNAT1 to form the 10-subunit holoenzyme (holo-TFIIH) active in transcription. Interacts with RARA; the interaction requires prior phosphorylation of RARA on 'Ser-369' which then enhances interaction of RARA with CDK7.

The protein localises to the nucleus. Component of the general transcription and DNA repair factor IIH (TFIIH) core complex, which is involved in general and transcription-coupled nucleotide excision repair (NER) of damaged DNA and, when complexed to CAK, in RNA transcription by RNA polymerase II. In NER, TFIIH acts by opening DNA around the lesion to allow the excision of the damaged oligonucleotide and its replacement by a new DNA fragment. In transcription, TFIIH has an essential role in transcription initiation. When the pre-initiation complex (PIC) has been established, TFIIH is required for promoter opening and promoter escape. Phosphorylation of the C-terminal tail (CTD) of the largest subunit of RNA polymerase II by the kinase module CAK controls the initiation of transcription. This chain is General transcription factor IIH subunit 3 (Gtf2h3), found in Mus musculus (Mouse).